We begin with the raw amino-acid sequence, 1358 residues long: DNA-directed RNA polymerase subunit beta (1358 aa).

This sequence belongs to the RNA polymerase beta chain family. As to quaternary structure, the RNAP catalytic core consists of 2 alpha, 1 beta, 1 beta' and 1 omega subunit. When a sigma factor is associated with the core the holoenzyme is formed, which can initiate transcription.

The catalysed reaction is RNA(n) + a ribonucleoside 5'-triphosphate = RNA(n+1) + diphosphate. Its function is as follows. DNA-dependent RNA polymerase catalyzes the transcription of DNA into RNA using the four ribonucleoside triphosphates as substrates. The chain is DNA-directed RNA polymerase subunit beta from Francisella tularensis subsp. holarctica (strain FTNF002-00 / FTA).